The chain runs to 478 residues: Ankyrin repeat and BTB/POZ domain-containing protein 1 (478 aa).

ANK repeat units follow at residues Met1–Val31 and Trp35–Ala64. BTB domains follow at residues Ser115–Val182 and Pro272–Pro346. The stretch at Val451 to Asp477 forms a coiled coil.

The protein localises to the cytoplasm. May act as a mediator of the PTEN growth-suppressive signaling pathway. May play a role in developmental processes. This chain is Ankyrin repeat and BTB/POZ domain-containing protein 1, found in Mus musculus (Mouse).